The primary structure comprises 661 residues: UvrABC system protein C (661 aa).

The GIY-YIG domain maps to A25–V104. The UVR domain occupies D214–L249. The span at F636–L652 shows a compositional bias: basic and acidic residues. A disordered region spans residues F636–A661.

The protein belongs to the UvrC family. In terms of assembly, interacts with UvrB in an incision complex.

It is found in the cytoplasm. In terms of biological role, the UvrABC repair system catalyzes the recognition and processing of DNA lesions. UvrC both incises the 5' and 3' sides of the lesion. The N-terminal half is responsible for the 3' incision and the C-terminal half is responsible for the 5' incision. The protein is UvrABC system protein C of Synechococcus sp. (strain CC9605).